Reading from the N-terminus, the 100-residue chain is NAD(P)H-quinone oxidoreductase subunit 4L, chloroplastic (100 aa).

3 helical membrane passes run 1-21 (MLEH…YGLV), 31-51 (MCLE…SNFF), and 63-83 (IFVI…VLAI).

Belongs to the complex I subunit 4L family. NDH is composed of at least 16 different subunits, 5 of which are encoded in the nucleus.

It is found in the plastid. The protein localises to the chloroplast thylakoid membrane. The catalysed reaction is a plastoquinone + NADH + (n+1) H(+)(in) = a plastoquinol + NAD(+) + n H(+)(out). It catalyses the reaction a plastoquinone + NADPH + (n+1) H(+)(in) = a plastoquinol + NADP(+) + n H(+)(out). Its function is as follows. NDH shuttles electrons from NAD(P)H:plastoquinone, via FMN and iron-sulfur (Fe-S) centers, to quinones in the photosynthetic chain and possibly in a chloroplast respiratory chain. The immediate electron acceptor for the enzyme in this species is believed to be plastoquinone. Couples the redox reaction to proton translocation, and thus conserves the redox energy in a proton gradient. The chain is NAD(P)H-quinone oxidoreductase subunit 4L, chloroplastic from Cryptomeria japonica (Japanese cedar).